The chain runs to 606 residues: Probable translation initiation factor IF-2 (606 aa).

Positions 11-230 constitute a tr-type G domain; sequence IRQPIVVVLG…LTGLVQRFMK (220 aa). The segment at 20–27 is G1; it reads GHVDHGKT. A GTP-binding site is contributed by 20–27; that stretch reads GHVDHGKT. The interval 45-49 is G2; that stretch reads EITQH. The segment at 85-88 is G3; the sequence is DTPG. GTP-binding positions include 85–89 and 139–142; these read DTPGH and NKID. Residues 139-142 form a G4 region; sequence NKID. A G5 region spans residues 207–209; that stretch reads SAK.

It belongs to the TRAFAC class translation factor GTPase superfamily. Classic translation factor GTPase family. IF-2 subfamily.

Its function is as follows. Function in general translation initiation by promoting the binding of the formylmethionine-tRNA to ribosomes. Seems to function along with eIF-2. This chain is Probable translation initiation factor IF-2, found in Staphylothermus marinus (strain ATCC 43588 / DSM 3639 / JCM 9404 / F1).